We begin with the raw amino-acid sequence, 126 residues long: Putative lipoprotein LprD (126 aa).

An N-terminal signal peptide occupies residues 1-21 (MSTTRRRRPALIALVIIATCG). The N-palmitoyl cysteine moiety is linked to residue Cys22. Cys22 is lipidated: S-diacylglycerol cysteine. Residues 40 to 60 (FQNLGYALQWPLFAWFCVYAY) traverse the membrane as a helical segment. Residues 70–101 (PPQPPTGGAAAEIPAGLLPERPKPAQQPPDDP) are disordered.

To M.leprae ML1177.

The protein localises to the cell membrane. The sequence is that of Putative lipoprotein LprD (lprD) from Mycobacterium tuberculosis (strain CDC 1551 / Oshkosh).